The sequence spans 261 residues: 4-hydroxy-tetrahydrodipicolinate reductase (261 aa).

9–14 (GCLGRM) is a binding site for NAD(+). Residue Arg-36 participates in NADP(+) binding. Residues 97–99 (GTT) and 118–121 (SANM) each bind NAD(+). The active-site Proton donor/acceptor is His-151. His-152 is a (S)-2,3,4,5-tetrahydrodipicolinate binding site. The active-site Proton donor is the Lys-155. 161–162 (GT) is a binding site for (S)-2,3,4,5-tetrahydrodipicolinate.

This sequence belongs to the DapB family.

The protein localises to the cytoplasm. It carries out the reaction (S)-2,3,4,5-tetrahydrodipicolinate + NAD(+) + H2O = (2S,4S)-4-hydroxy-2,3,4,5-tetrahydrodipicolinate + NADH + H(+). The catalysed reaction is (S)-2,3,4,5-tetrahydrodipicolinate + NADP(+) + H2O = (2S,4S)-4-hydroxy-2,3,4,5-tetrahydrodipicolinate + NADPH + H(+). It functions in the pathway amino-acid biosynthesis; L-lysine biosynthesis via DAP pathway; (S)-tetrahydrodipicolinate from L-aspartate: step 4/4. In terms of biological role, catalyzes the conversion of 4-hydroxy-tetrahydrodipicolinate (HTPA) to tetrahydrodipicolinate. This Wolbachia pipientis wMel protein is 4-hydroxy-tetrahydrodipicolinate reductase.